A 346-amino-acid polypeptide reads, in one-letter code: MNCREIIRKLLLNPAHNNAATRTAQGDNGDSNQRAYTRISRLAAFQSAQTQESTPKTNGTGRATTEGLTEAEVRWLVMESRALFMSQPMLVEIAAPVRICGDVHGQYTDLLRLFDLGGFPPDANYIFLGDYVDRGDQSLETICLLLAYKLSFPETFFLLRGNHECSSINRIYGFFDECKRRYSVRLWKQFTDTFNCMPVAGLVEGRILCMHGGLSPELTDLDQIRRILRPTDVPDSGLICDLLWSDPSTNMESNWSENDRGVSWTFSESVVKSFNKKFDLDLICRAHQVVDAGYEFFAARQLVTVFSAPNYCDEFDNAGAFMCVDENLMCSFVQIEPTRTLLRYFF.

Residues Asp102, His104, Asp130, and Asn162 each contribute to the Mn(2+) site. The Proton donor role is filled by His163. The Mn(2+) site is built by His211 and His287.

It belongs to the PPP phosphatase family. PP-1 subfamily. Requires Mn(2+) as cofactor.

It carries out the reaction O-phospho-L-seryl-[protein] + H2O = L-seryl-[protein] + phosphate. It catalyses the reaction O-phospho-L-threonyl-[protein] + H2O = L-threonyl-[protein] + phosphate. The sequence is that of Serine/threonine-protein phosphatase PP1(5.9) from Trypanosoma brucei brucei.